Consider the following 243-residue polypeptide: Ornithine decarboxylase antizyme 3 (243 aa).

Phosphoserine is present on residues S6, S9, and S12.

Belongs to the ODC antizyme family. In terms of assembly, interacts with ODC1 and thereby sterically blocks ODC homodimerization. Interacts with AZIN2; this interaction disrupts the interaction between the antizyme and ODC1. Interacts with GGN. Isoform 2 interacts with PPP1R16A; Modulates PPP1CB activity. In terms of tissue distribution, testis-specific. Isoform 2 is expressed in outer dense fibers, fibrous sheath and the connecting piece of sperm.

The protein localises to the nucleus. The protein resides in the cytoplasm. Its subcellular location is the cell projection. It is found in the cilium. It localises to the flagellum. Functionally, ornithine decarboxylase (ODC) antizyme protein that negatively regulates ODC activity and intracellular polyamine biosynthesis and uptake in response to increased intracellular polyamine levels. Binds to ODC monomers, inhibiting the assembly of the functional ODC homodimers. Does not target the ODC monomers for degradation, which allows a protein synthesis-independent restoration of ODC activity. Stabilizes AZIN2 by interfering with its ubiquitination. Involved in the translocation of AZNI2 from ER-Golgi intermediate compartment (ERGIC) to the cytosol. Probably plays a key role in spermatogenesis by regulating the intracellular concentration of polyamines in haploid germ cells. Its function is as follows. Does not possess antizyme activity. Modulates PPP1CB activity through its interaction with PPP1R16A. The polypeptide is Ornithine decarboxylase antizyme 3 (Rattus norvegicus (Rat)).